A 345-amino-acid polypeptide reads, in one-letter code: GTPase Obg (345 aa).

Positions 1 to 159 (MKFLDQAKVY…KWIWLRLKLI (159 aa)) constitute an Obg domain. An OBG-type G domain is found at 160–327 (ADAGLVGLPN…ALRALLAVID (168 aa)). GTP is bound by residues 166–173 (GLPNAGKS), 191–195 (FTTLH), 212–215 (DIPG), 279–282 (SKID), and 308–310 (SSQ). Mg(2+) contacts are provided by Ser173 and Thr193.

The protein belongs to the TRAFAC class OBG-HflX-like GTPase superfamily. OBG GTPase family. Monomer. It depends on Mg(2+) as a cofactor.

The protein localises to the cytoplasm. In terms of biological role, an essential GTPase which binds GTP, GDP and possibly (p)ppGpp with moderate affinity, with high nucleotide exchange rates and a fairly low GTP hydrolysis rate. Plays a role in control of the cell cycle, stress response, ribosome biogenesis and in those bacteria that undergo differentiation, in morphogenesis control. The chain is GTPase Obg from Azorhizobium caulinodans (strain ATCC 43989 / DSM 5975 / JCM 20966 / LMG 6465 / NBRC 14845 / NCIMB 13405 / ORS 571).